We begin with the raw amino-acid sequence, 271 residues long: Bifunctional protein FolD (271 aa).

NADP(+)-binding positions include 154–156 (GRS), Ser-181, and Ile-222.

Belongs to the tetrahydrofolate dehydrogenase/cyclohydrolase family. As to quaternary structure, homodimer.

It catalyses the reaction (6R)-5,10-methylene-5,6,7,8-tetrahydrofolate + NADP(+) = (6R)-5,10-methenyltetrahydrofolate + NADPH. The catalysed reaction is (6R)-5,10-methenyltetrahydrofolate + H2O = (6R)-10-formyltetrahydrofolate + H(+). Its pathway is one-carbon metabolism; tetrahydrofolate interconversion. In terms of biological role, catalyzes the oxidation of 5,10-methylenetetrahydrofolate to 5,10-methenyltetrahydrofolate and then the hydrolysis of 5,10-methenyltetrahydrofolate to 10-formyltetrahydrofolate. The chain is Bifunctional protein FolD from Thermotoga maritima (strain ATCC 43589 / DSM 3109 / JCM 10099 / NBRC 100826 / MSB8).